We begin with the raw amino-acid sequence, 84 residues long: uncharacterized protein (84 aa).

The protein belongs to the chlamydial CPn_0710/CT_666/TC_0037 family.

This is an uncharacterized protein from Chlamydia pneumoniae (Chlamydophila pneumoniae).